The chain runs to 301 residues: tRNA dimethylallyltransferase (301 aa).

8 to 15 is an ATP binding site; that stretch reads GPTAVGKT. 10-15 is a binding site for substrate; that stretch reads TAVGKT. An interaction with substrate tRNA region spans residues 33 to 36; it reads DSRQ.

It belongs to the IPP transferase family. As to quaternary structure, monomer. The cofactor is Mg(2+).

The enzyme catalyses adenosine(37) in tRNA + dimethylallyl diphosphate = N(6)-dimethylallyladenosine(37) in tRNA + diphosphate. Catalyzes the transfer of a dimethylallyl group onto the adenine at position 37 in tRNAs that read codons beginning with uridine, leading to the formation of N6-(dimethylallyl)adenosine (i(6)A). This is tRNA dimethylallyltransferase from Thermosipho melanesiensis (strain DSM 12029 / CIP 104789 / BI429).